Reading from the N-terminus, the 157-residue chain is Crossover junction endodeoxyribonuclease RuvC (157 aa).

Residues aspartate 7, glutamate 67, and aspartate 139 contribute to the active site. 3 residues coordinate Mg(2+): aspartate 7, glutamate 67, and aspartate 139.

Belongs to the RuvC family. In terms of assembly, homodimer which binds Holliday junction (HJ) DNA. The HJ becomes 2-fold symmetrical on binding to RuvC with unstacked arms; it has a different conformation from HJ DNA in complex with RuvA. In the full resolvosome a probable DNA-RuvA(4)-RuvB(12)-RuvC(2) complex forms which resolves the HJ. Mg(2+) serves as cofactor.

The protein localises to the cytoplasm. The enzyme catalyses Endonucleolytic cleavage at a junction such as a reciprocal single-stranded crossover between two homologous DNA duplexes (Holliday junction).. Its function is as follows. The RuvA-RuvB-RuvC complex processes Holliday junction (HJ) DNA during genetic recombination and DNA repair. Endonuclease that resolves HJ intermediates. Cleaves cruciform DNA by making single-stranded nicks across the HJ at symmetrical positions within the homologous arms, yielding a 5'-phosphate and a 3'-hydroxyl group; requires a central core of homology in the junction. The consensus cleavage sequence is 5'-(A/T)TT(C/G)-3'. Cleavage occurs on the 3'-side of the TT dinucleotide at the point of strand exchange. HJ branch migration catalyzed by RuvA-RuvB allows RuvC to scan DNA until it finds its consensus sequence, where it cleaves and resolves the cruciform DNA. In Prochlorococcus marinus (strain AS9601), this protein is Crossover junction endodeoxyribonuclease RuvC.